Here is an 855-residue protein sequence, read N- to C-terminus: Potassium channel AKT2 (855 aa).

Over residues 1–12 (MKTSSFESASSS) the composition is skewed to low complexity. The tract at residues 1-24 (MKTSSFESASSSGGSGGGGGGGGG) is disordered. Over 1 to 75 (MKTSSFESAS…PLDSRYRCWD (75 aa)) the chain is Cytoplasmic. Residues 13 to 24 (GGSGGGGGGGGG) show a composition bias toward gly residues. A helical transmembrane segment spans residues 76 to 96 (TFMVVLVAYSAWVYPFEVAFM). The Extracellular portion of the chain corresponds to 97–105 (NASPKGGLE). The chain crosses the membrane as a helical span at residues 106 to 126 (VADIVVDLFFAVDIVLTFFVA). Residues 127-149 (YIDSRTQLLVRDRRRIATRYLST) lie on the Cytoplasmic side of the membrane. The chain crosses the membrane as a helical span at residues 150 to 170 (FFIMDVASTIPFQGLAYIVTG). Over 171–179 (EVRESPAFS) the chain is Extracellular. Residues 180–200 (LLGILRLWRLRKVKQFFTRLE) form a helical; Voltage-sensor membrane-spanning segment. Residues 201-214 (KDIRFNYFWIRCAR) lie on the Cytoplasmic side of the membrane. Residues 215–235 (LIAVTLFLVHCAGCLYYLIAD) traverse the membrane as a helical segment. The Extracellular segment spans residues 236–262 (RYPHREKTWIGAVIPDFQEASLWIRYT). The segment at residues 263–282 (SSVYWSITTMTTVGYGDMHA) is an intramembrane region (pore-forming). Over 283–285 (QNT) the chain is Extracellular. A helical membrane pass occupies residues 286 to 306 (VEMIFNIFYMLFNLGLTAYLI). The Cytoplasmic segment spans residues 307-855 (GNMTNLVVEG…VASMDSVSGS (549 aa)). 391–511 (LFKGVSREVL…VVIIKNFLKH (121 aa)) is an a nucleoside 3',5'-cyclic phosphate binding site. 5 ANK repeats span residues 536–565 (NIPC…DPDV), 569–598 (KGRT…NVNI), 602–631 (QGNT…VSSP), 634–663 (AAGD…AVDS), and 667–696 (DGAT…SVDR). The interval 744 to 765 (EVGSSGDSRNGRRQSARSDGAH) is disordered. Positions 768–855 (RVSIYRGHPF…VASMDSVSGS (88 aa)) constitute a KHA domain.

This sequence belongs to the potassium channel family. Plant (TC 1.A.1.4) subfamily. In terms of assembly, the potassium channel is probably a homo- or heterotetrameric complex of pore-forming subunits.

Its subcellular location is the membrane. Its function is as follows. Probable inward-rectifying potassium channel. Assuming opened or closed conformations in response to the voltage difference across the membrane, the channel is activated by hyperpolarization. The chain is Potassium channel AKT2 from Oryza sativa subsp. japonica (Rice).